The following is a 92-amino-acid chain: Small ribosomal subunit protein uS19 (92 aa).

Belongs to the universal ribosomal protein uS19 family.

Its function is as follows. Protein S19 forms a complex with S13 that binds strongly to the 16S ribosomal RNA. This is Small ribosomal subunit protein uS19 from Mycoplasmopsis synoviae (strain 53) (Mycoplasma synoviae).